The chain runs to 1742 residues: NACHT and WD repeat domain-containing protein 2 (1742 aa).

5 LRR repeats span residues 386 to 410 (FYEY…GHIN), 677 to 698 (LEDV…TRPS), 724 to 747 (VKNV…LYLQ), 883 to 906 (YSQE…VIAF), and 925 to 953 (LPKL…SSMD). Positions 410–737 (NPLVVYGGPC…TLLVWANRHL (328 aa)) constitute an NACHT domain. WD repeat units follow at residues 963 to 1004 (LASS…LLRQ), 1007 to 1046 (TAQS…LLSE), 1140 to 1179 (FSGG…NPQL), 1229 to 1271 (RHNE…ASLQ), 1272 to 1311 (ESSG…AMSN), 1314 to 1353 (KTGK…IEAV), 1355 to 1394 (KHEG…NLFR), 1396 to 1434 (NGQR…RVCN), 1476 to 1516 (EDGI…ICRR), 1522 to 1561 (NFLK…LRVV), and 1614 to 1653 (SLYK…DAAL). The disordered stretch occupies residues 1702-1721 (PITVSDSSESNEATPSKKHN). Over residues 1703-1715 (ITVSDSSESNEAT) the composition is skewed to polar residues.

In Mus musculus (Mouse), this protein is NACHT and WD repeat domain-containing protein 2 (Nwd2).